A 1088-amino-acid polypeptide reads, in one-letter code: DEAD-box ATP-dependent RNA helicase 40 (1088 aa).

3 disordered regions span residues 1–28, 47–178, and 192–254; these read MATT…PWKG, TQYE…QYAH, and TQGL…QNTH. Alanine 2 is subject to N-acetylalanine. Positions 20-54 constitute a WW domain; the sequence is PTLPQPWKGLIDGSTGILYYWNPETNVTQYERPSA. 3 stretches are compositionally biased toward low complexity: residues 87-137, 148-171, and 200-215; these read VGHV…SQSM, QTYQ…MPQQ, and QTPQ…PSQQ. A compositionally biased stretch (basic and acidic residues) spans 222–231; sequence PKREGDEFHG. The segment covering 236 to 254 has biased composition (polar residues); the sequence is GFSQPHLPNSERSPSQNTH. The Q motif signature appears at 435 to 463; that stretch reads ITFESSGLPPEILRELLSAGFPSPTPIQA. Positions 466 to 640 constitute a Helicase ATP-binding domain; sequence WPIALQSRDI…SDLLVNPVQV (175 aa). 479–486 is an ATP binding site; that stretch reads AKTGSGKT. The short motif at 588-591 is the DEAD box element; it reads DEAD. The 145-residue stretch at 669 to 813 folds into the Helicase C-terminal domain; it reads RLEQILRSQE…QVPPQVRDIA (145 aa). Composition is skewed to gly residues over residues 861-885, 893-902, 911-920, and 932-944; these read EGGF…GGRF, GRGGNRGRGF, NVGGRGGFGR, and FGRG…GRGV. The tract at residues 861 to 1033 is disordered; sequence EGGFGGREGG…RRDRAPRVSG (173 aa). The span at 945–963 shows a compositional bias: basic and acidic residues; it reads GRFDNRRGRSRSRSPDLVR. The segment covering 969–983 has biased composition (low complexity); sequence SSYSRSRSRSGSYSR. Residues 984–1013 show a composition bias toward basic residues; it reads SRSRSRSWSRSRSRSPRHSRDRGGHNRSRS.

This sequence belongs to the DEAD box helicase family. DDX5/DBP2 subfamily.

It is found in the nucleus. The enzyme catalyses ATP + H2O = ADP + phosphate + H(+). Functionally, ATP-dependent RNA helicase involved nonsense-mediated mRNA decay and ribosome biogenesis through rRNA processing. The chain is DEAD-box ATP-dependent RNA helicase 40 (RH40) from Arabidopsis thaliana (Mouse-ear cress).